An 899-amino-acid polypeptide reads, in one-letter code: Plasma membrane ATPase (899 aa).

The interval 1–72 is disordered; it reads MSAATEPTKE…TDPSYGLTSD (72 aa). At 1 to 96 the chain is on the cytoplasmic side; it reads MSAATEPTKE…SEETENLFVK (96 aa). Positions 17–29 are enriched in acidic residues; it reads DSDDEDEDIDQLI. Residues 97 to 117 form a helical membrane-spanning segment; it reads FLMFFIGPIQFVMEAAAILAA. At 118–121 the chain is on the extracellular side; it reads GLED. A helical transmembrane segment spans residues 122–141; the sequence is WVDFGVICGLLFLNAAVGFI. Over 142 to 272 the chain is Cytoplasmic; it reads QEYQAGSIVD…GSGHFTEVLN (131 aa). A helical transmembrane segment spans residues 273–294; the sequence is GIGTILLILVIVTLLLVWVASF. The Extracellular portion of the chain corresponds to 295–305; it reads YRTNKIVRILR. Residues 306–328 form a helical membrane-spanning segment; that stretch reads YTLAITIVGVPVGLPAVVTTTMA. Residues 329–700 are Cytoplasmic-facing; sequence VGAAYLAKKQ…IAILNRSLNI (372 aa). The active-site 4-aspartylphosphate intermediate is Asp359. Positions 615 and 619 each coordinate Mg(2+). The chain crosses the membrane as a helical span at residues 701-719; it reads DLVVFIAIFADVATLAIAY. Topologically, residues 720 to 735 are extracellular; it reads DNAPYSPKPVKWNLRR. A helical membrane pass occupies residues 736 to 755; it reads LWGMSVILGIILAIGTWITL. Residues 756–805 lie on the Cytoplasmic side of the membrane; it reads TTMFVPKGGIIQNFGSIDGVLFLQISLTENWLIFITRAAGPFWSSIPSWQ. Residues 806–826 traverse the membrane as a helical segment; it reads LSGAVLIVDIIATMFCLFGWW. Topologically, residues 827–838 are extracellular; the sequence is SQNWNDIVTVVR. The chain crosses the membrane as a helical span at residues 839–855; it reads VWIFSFGVFCVMGGAYY. The Cytoplasmic segment spans residues 856–899; sequence MMSESEAFDRFMNGKSRRDKPSGRSVEDFLMAMQRVSTQHEKEN.

Belongs to the cation transport ATPase (P-type) (TC 3.A.3) family. Type IIIA subfamily.

It is found in the cell membrane. It catalyses the reaction ATP + H2O + H(+)(in) = ADP + phosphate + 2 H(+)(out). With respect to regulation, activated by high pH or also by potassium ions when the medium pH is low. Functionally, the plasma membrane ATPase of plants and fungi is a hydrogen ion pump. The proton gradient it generates drives the active transport of nutrients by H(+)-symport. The resulting external acidification and/or internal alkinization may mediate growth responses. The chain is Plasma membrane ATPase (PMA1) from Kluyveromyces lactis (strain ATCC 8585 / CBS 2359 / DSM 70799 / NBRC 1267 / NRRL Y-1140 / WM37) (Yeast).